We begin with the raw amino-acid sequence, 261 residues long: Zinc finger protein 664 (261 aa).

9 consecutive C2H2-type zinc fingers follow at residues 3-25, 31-53, 59-81, 87-109, 115-137, 143-165, 171-193, 199-221, and 227-249; these read YKCPMCREFFSERADLFMHQKIH, HKCDKCDKGFFHISELHIHWRDH, YKCDDCVKDFSTTTKLNRHKKIH, YKCYECGKAFNWSSHLQIHMRVH, YVCSECGRGFSNSSNLCMHQRVH, FKCEECGKAFRHTSSLCMHQRVH, YKCYECGKAFSQSSSLCIHQRVH, YRCCGCGKAFSQSSSLCIHQRVH, and FKCDECGKAFSQSTSLCIHQRVH. Lys-257 is covalently cross-linked (Glycyl lysine isopeptide (Lys-Gly) (interchain with G-Cter in SUMO2)).

Belongs to the krueppel C2H2-type zinc-finger protein family.

Its subcellular location is the nucleus. Functionally, may be involved in transcriptional regulation. The protein is Zinc finger protein 664 (Znf664) of Mus musculus (Mouse).